A 624-amino-acid chain; its full sequence is Anti-CBASS protein Acb1 (624 aa).

Residue Tyr106 participates in 3',3'-cGAMP binding. Tyr106 is a binding site for 3',3'-cUAMP. Residues His503, Thr505, His581, and Thr583 contribute to the active site. Residue Trp617 participates in 3',3'-cGAMP binding. Trp617 serves as a coordination point for 3',3'-cUAMP.

The protein belongs to the anti-CBASS protein Acb1 family.

The enzyme catalyses 3',3'-cUAMP + H2O = U[3'-5']pAp[3'] + H(+). It catalyses the reaction 3',3',3'-c-tri-AMP + H2O = A[3'-5']pA[3'-5']pAp[3'] + H(+). The catalysed reaction is 3',3',3'-cAAG + H2O = G[3'-5']pA[3'-5']pAp[3'] + H(+). It carries out the reaction 3',3',3'-cAAG + H2O = A[3'-5']pG[3'-5']pAp[3'] + H(+). The enzyme catalyses 3',3'-cGAMP + H2O = G[3'-5']pAp[3'] + H(+). Counteracts or regulates the endogenous CBASS antiviral defense system. Phosphodiesterase that enables metal-independent hydrolysis of the host cyclic di- and trinucleotide CBASS signals such as 3'3'-cGAMP, 3'3'cUA, and 3'3'3'-cAAA. In Sphingomonas paeninsulae, this protein is Anti-CBASS protein Acb1.